The primary structure comprises 360 residues: tRNA (guanine(9)-N1)-methyltransferase (360 aa).

The tract at residues 1–77 is disordered; that stretch reads MENQDTEQSQ…RRKERIKEAE (77 aa). Composition is skewed to basic and acidic residues over residues 8-24 and 33-55; these read QSQK…DFKR and MTKR…DEYK. A compositionally biased stretch (basic residues) spans 56–67; that stretch reads QKKREKKKAARE. The span at 68–77 shows a compositional bias: basic and acidic residues; it reads RRKERIKEAE. An SAM-dependent MTase TRM10-type domain is found at 94–293; the sequence is RAKVAPQEQI…EVLPPRKVKG (200 aa). S-adenosyl-L-methionine-binding positions include 199–200, Gly219, 223–227, Cys231, Leu245, and 257–259; these read LT, DKNRY, and QVL. Asp223 functions as the Proton acceptor in the catalytic mechanism. Positions 291 to 360 are disordered; that stretch reads VKGKLTHGSD…SDEPSKGADH (70 aa). The span at 297–306 shows a compositional bias: basic and acidic residues; sequence HGSDPEKSIE. The span at 307 to 324 shows a compositional bias: low complexity; it reads PSEVSEQPVSSEQSEQPV. Residues 328–343 show a composition bias toward polar residues; the sequence is QPVSSEQPVLSEQPVL.

It belongs to the class IV-like SAM-binding methyltransferase superfamily. TRM10 family. Monomer.

The protein resides in the cytoplasm. It localises to the nucleus. It catalyses the reaction guanosine(9) in tRNA + S-adenosyl-L-methionine = N(1)-methylguanosine(9) in tRNA + S-adenosyl-L-homocysteine + H(+). In terms of biological role, S-adenosyl-L-methionine-dependent guanine N(1)-methyltransferase that catalyzes the formation of N(1)-methylguanine at position 9 (m1G9) in cytoplasmic tRNA. The protein is tRNA (guanine(9)-N1)-methyltransferase of Debaryomyces hansenii (strain ATCC 36239 / CBS 767 / BCRC 21394 / JCM 1990 / NBRC 0083 / IGC 2968) (Yeast).